The chain runs to 97 residues: Thiosulfate sulfurtransferase/rhodanese-like domain-containing protein 3 (97 aa).

The region spanning 32–84 is the Rhodanese domain; the sequence is YKELKNLLNSKNIMLIDVREIWEILEYQKIPESINVPLDEVGEALQMNPRDFK. The residue at position 84 (Lys-84) is an N6-succinyllysine.

The sequence is that of Thiosulfate sulfurtransferase/rhodanese-like domain-containing protein 3 (TSTD3) from Homo sapiens (Human).